Reading from the N-terminus, the 277-residue chain is Glycerol-3-phosphate acyltransferase (277 aa).

The next 5 helical transmembrane spans lie at 3 to 23 (LFIFLILVGYLMGSINSAIIV), 55 to 75 (IMVMVFDALKGILPVILAKLL), 79 to 99 (PVTVAFTALAAVVGHMYPVFF), 111 to 131 (IGALLAFHFVIGVMVAATWLL), and 155 to 175 (LILVGNLNIFPPLFMITILVL). The disordered stretch occupies residues 207–277 (SPATSAEQEF…PKTKTVKEKE (71 aa)). Over residues 216–239 (FPGKEVIDTNIDETEKTEQAEAVK) the composition is skewed to basic and acidic residues. Composition is skewed to basic residues over residues 240–253 (KPKAKKATTKAKKT) and 262–271 (KPRSTKPKTK).

It belongs to the PlsY family. As to quaternary structure, probably interacts with PlsX.

Its subcellular location is the cell inner membrane. It carries out the reaction an acyl phosphate + sn-glycerol 3-phosphate = a 1-acyl-sn-glycero-3-phosphate + phosphate. It participates in lipid metabolism; phospholipid metabolism. Functionally, catalyzes the transfer of an acyl group from acyl-phosphate (acyl-PO(4)) to glycerol-3-phosphate (G3P) to form lysophosphatidic acid (LPA). This enzyme utilizes acyl-phosphate as fatty acyl donor, but not acyl-CoA or acyl-ACP. The protein is Glycerol-3-phosphate acyltransferase of Legionella pneumophila (strain Paris).